We begin with the raw amino-acid sequence, 136 residues long: Classical arabinogalactan protein 26 (136 aa).

The signal sequence occupies residues 1–21 (MSVSLFTAFTVLSLCLHTSTS). A disordered region spans residues 38 to 95 (APSSFSASTPAMSPDTSPLFPTPGSSEMSPSPSESSIMPTIPSSLSPPNPDAVTPDPL). The span at 40 to 53 (SSFSASTPAMSPDT) shows a compositional bias: polar residues. Residues 59-81 (TPGSSEMSPSPSESSIMPTIPSS) are compositionally biased toward low complexity. S108 carries GPI-anchor amidated serine lipidation. Residues 109 to 136 (SSVCLVSSQLSSLLLVLLMLLLAFCSFF) constitute a propeptide, removed in mature form.

It belongs to the classical AGP family. In terms of processing, O-glycosylated on the hydroxyproline residues.

It is found in the cell membrane. Proteoglycan that seems to be implicated in diverse developmental roles such as differentiation, cell-cell recognition, embryogenesis and programmed cell death. The polypeptide is Classical arabinogalactan protein 26 (AGP26) (Arabidopsis thaliana (Mouse-ear cress)).